The chain runs to 500 residues: MEVSTNPSSNIDPGDYVEMNDSITHLPSKVVIQDITMELHCPLCNDWFRDPLMLSCGHNFCEACIQDFWRLQAKETFCPECKMLCQYNNCTFNPVLDKLVEKIKKLPLLKGHPQCPEHGENLKLFSKPDGKLICFQCKDARLSVGQSKEFLQISDAVHFFTEELAIQQGQLETTLKELQTLRNMQKEAIAAHKENKLHLQQHVSMEFLKLHQFLHSKEKDILTELREEGKALNEEMELNLSQLQEQCLLAKDMLVSIQAKTEQQNSFDFLKDITTLLHSLEQGMKVLATRELISRKLNLGQYKGPIQYMVWREMQDTLCPGLSPLTLDPKTAHPNLVLSKSQTSVWHGDIKKIMPDDPERFDSSVAVLGSRGFTSGKWYWEVEVAKKTKWTVGVVRESIIRKGSCPLTPEQGFWLLRLRNQTDLKALDLPSFSLTLTNNLDKVGIYLDYEGGQLSFYNAKTMTHIYTFSNTFMEKLYPYFCPCLNDGGENKEPLHILHPQ.

Residues 1 to 152 (MEVSTNPSSN…SVGQSKEFLQ (152 aa)) are necessary for nuclear localization. The RING-type zinc-finger motif lies at 41-82 (CPLCNDWFRDPLMLSCGHNFCEACIQDFWRLQAKETFCPECK). Residues 161–255 (TEELAIQQGQ…QCLLAKDMLV (95 aa)) adopt a coiled-coil conformation. In terms of domain architecture, B30.2/SPRY spans 305 to 500 (PIQYMVWREM…KEPLHILHPQ (196 aa)). A Phosphoserine modification is found at serine 341.

It belongs to the TRIM/RBCC family. In terms of assembly, homo-multimer; required for antiviral activity. Interacts with PML. In terms of processing, phosphorylated. Phosphorylation is necessary for nuclear localization.

The protein localises to the cytoplasm. It localises to the nucleus. It is found in the nucleus speckle. The protein resides in the cytoskeleton. Its subcellular location is the microtubule organizing center. The protein localises to the centrosome. It carries out the reaction S-ubiquitinyl-[E2 ubiquitin-conjugating enzyme]-L-cysteine + [acceptor protein]-L-lysine = [E2 ubiquitin-conjugating enzyme]-L-cysteine + N(6)-ubiquitinyl-[acceptor protein]-L-lysine.. It functions in the pathway protein modification; protein ubiquitination. Its function is as follows. E3 ubiquitin ligase that plays an important role in antiviral immunity by restricting different viral infections including dengue virus or vesicular stomatitis indiana virus. Ubiquitinates viral proteins such as dengue virus NS3 thereby limiting infection. In addition, acts as a key mediator of type I interferon induced microtubule stabilization by directly associating to microtubules independently of its E3 ligase activity. Also plays a role in cataract formation together with TP53. Mechanistically, inhibits UVB-induced cell apoptosis and reactive oxygen species (ROS) production by inducing TP53 ubiquitination. Regulates centrosome dynamics and mitotic progression by ubiquitinating STK3/MST2; leading to its redistribution to the perinuclear cytoskeleton and subsequent phosphorylation by PLK1. This is E3 ubiquitin-protein ligase TRIM69 (TRIM69) from Homo sapiens (Human).